Consider the following 310-residue polypeptide: Protoheme IX farnesyltransferase (310 aa).

8 consecutive transmembrane segments (helical) span residues 31–51 (VIEL…RGSV), 53–73 (PLLI…ANTL), 102–122 (NALI…WGTS), 124–144 (LLSG…YTLL), 149–169 (TSQN…IGWS), 170–190 (AVTG…FFWT), 242–262 (LATG…FLVM), and 289–309 (LAVV…TLLG).

Belongs to the UbiA prenyltransferase family. Protoheme IX farnesyltransferase subfamily.

It is found in the cell membrane. The enzyme catalyses heme b + (2E,6E)-farnesyl diphosphate + H2O = Fe(II)-heme o + diphosphate. Its pathway is porphyrin-containing compound metabolism; heme O biosynthesis; heme O from protoheme: step 1/1. Its function is as follows. Converts heme B (protoheme IX) to heme O by substitution of the vinyl group on carbon 2 of heme B porphyrin ring with a hydroxyethyl farnesyl side group. This Mycobacterium sp. (strain JLS) protein is Protoheme IX farnesyltransferase.